Here is a 747-residue protein sequence, read N- to C-terminus: MLCSNRQSSLDFQDLLFFLLLCIWLFTPLASCVLQAAGNDTYPKWPTRWDPLFYRVLQCSAPFWGFVADRFKKGKAVLLFSVLCWVVFNCGIGFVKPAAMSCVSVDPTVQSPVNFTNYTHAGNHTRQRRYLTEDAYANPPLSQPILAAYRPHSRYIRSANTNTTSAPFRNSTVDISMASNLTTMSPSATKVPLKSTSTMETQAITAKVKQYIIIFNKEQVDTIFLLILLVIIIGEFFSAPAVTIVDTVTLQYLGQNRDRYGLQRMWGSLGWGIAMLSVGIWIDNTHITIFIQGLGCVLPDYKNYQIAFIVFGVLMTSALIVATQFHFDNRAYQSDEEEDKKEDVEIPQVIQEVSSPESSSDDAPVCPETNPQHFPFKDLFRIICGVRYGTVLFVAWFMGFGYGFVFTFLFWHLEDLKGTTTLFGICSVLSHISELAAYFISHKLIELVGHIRVLYIGLACNTARYLYISYLENAWIVLPMEVLQGLTHASVWAACISYLSAAVPPALRTSAQGILQGLHLGLGRGCGAMLGGVFVNFFGAAETFRGLGMASLVTLLIFSLIQWLLGQNEEKKGAMLAENIPVPSSPVPIATIDLVQNQSTSQPNSDSKSRKTRHQEEQEDPNKPAWVVSASPWVTIAFALYQIRDMVAQTKNNDCQGQQERSEQQTSAAPPGDESTSSQPNASSSPVEYAFQGPASSAFVPQNTHPVRPVAEPPSSTEAKEPVENSTPLPGHSKPLPAITQTQPTTH.

11 helical membrane-spanning segments follow: residues 15–35, 75–95, 222–242, 271–291, 306–326, 391–411, 420–440, 453–470, 485–507, 520–540, and 546–566; these read LLFF…CVLQ, KAVL…IGFV, TIFL…APAV, WGIA…TIFI, IAFI…TQFH, VLFV…FLFW, TTLF…AYFI, VLYI…YISY, GLTH…PPAL, LGLG…FFGA, and GLGM…WLLG. 2 stretches are compositionally biased toward polar residues: residues 597–606 and 652–668; these read NQSTSQPNSD and NNDC…QTSA. 2 disordered regions span residues 597 to 625 and 652 to 747; these read NQST…NKPA and NNDC…PTTH. Positions 675 to 685 are enriched in low complexity; it reads STSSQPNASSS.

The protein belongs to the major facilitator superfamily. MFSD6 family.

It localises to the membrane. The sequence is that of Major facilitator superfamily domain-containing protein 6-B (mfsd6b) from Danio rerio (Zebrafish).